A 374-amino-acid chain; its full sequence is Chaperone protein DnaJ (374 aa).

The region spanning S4 to G69 is the J domain. The segment at G136–K213 adopts a CR-type zinc-finger fold. Residues C149, C152, C165, C168, C187, C190, C201, and C204 each coordinate Zn(2+). 4 CXXCXGXG motif repeats span residues C149 to G156, C165 to G172, C187 to G194, and C201 to G208.

It belongs to the DnaJ family. Homodimer. Zn(2+) serves as cofactor.

The protein localises to the cytoplasm. Participates actively in the response to hyperosmotic and heat shock by preventing the aggregation of stress-denatured proteins and by disaggregating proteins, also in an autonomous, DnaK-independent fashion. Unfolded proteins bind initially to DnaJ; upon interaction with the DnaJ-bound protein, DnaK hydrolyzes its bound ATP, resulting in the formation of a stable complex. GrpE releases ADP from DnaK; ATP binding to DnaK triggers the release of the substrate protein, thus completing the reaction cycle. Several rounds of ATP-dependent interactions between DnaJ, DnaK and GrpE are required for fully efficient folding. Also involved, together with DnaK and GrpE, in the DNA replication of plasmids through activation of initiation proteins. This Campylobacter jejuni subsp. jejuni serotype O:6 (strain 81116 / NCTC 11828) protein is Chaperone protein DnaJ.